Consider the following 325-residue polypeptide: Bifunctional ligase/repressor BirA (325 aa).

Residues 23 to 42 (GQKISDALGCSRTAVWKHIE) constitute a DNA-binding region (H-T-H motif). Residues 74–262 (RFGLKTEVMG…CFEKRYRDYM (189 aa)) enclose the BPL/LPL catalytic domain. Biotin is bound by residues Q118, 122–124 (RGR), and K189.

It belongs to the biotin--protein ligase family.

It carries out the reaction biotin + L-lysyl-[protein] + ATP = N(6)-biotinyl-L-lysyl-[protein] + AMP + diphosphate + H(+). Acts both as a biotin--[acetyl-CoA-carboxylase] ligase and a repressor. This is Bifunctional ligase/repressor BirA from Bacillus spizizenii (strain ATCC 23059 / NRRL B-14472 / W23) (Bacillus subtilis subsp. spizizenii).